Consider the following 240-residue polypeptide: Eukaryotic translation initiation factor 3 subunit J (240 aa).

The segment at 19–95 (KADVNKWAGE…FANMTPEQQL (77 aa)) is disordered. Residues 28–45 (EDEDDVKDNWEDDDEEEE) are compositionally biased toward acidic residues. A compositionally biased stretch (basic and acidic residues) spans 46–56 (KKDAPKQEDTP). Residues 60–71 (AKPKKAAQQKKL) show a composition bias toward basic residues. Coiled coils occupy residues 63–90 (KKAAQQKKLKKEDLERLQREEEEFANMT) and 176–235 (SNNI…DYDD). The segment covering 72–81 (KKEDLERLQR) has biased composition (basic and acidic residues).

Belongs to the eIF-3 subunit J family. In terms of assembly, component of the eukaryotic translation initiation factor 3 (eIF-3) complex.

It is found in the cytoplasm. Its function is as follows. Component of the eukaryotic translation initiation factor 3 (eIF-3) complex, which is involved in protein synthesis of a specialized repertoire of mRNAs and, together with other initiation factors, stimulates binding of mRNA and methionyl-tRNAi to the 40S ribosome. The eIF-3 complex specifically targets and initiates translation of a subset of mRNAs involved in cell proliferation. The sequence is that of Eukaryotic translation initiation factor 3 subunit J from Anopheles gambiae (African malaria mosquito).